The primary structure comprises 157 residues: Transcription elongation factor GreA (157 aa).

Residues 47–75 are a coiled coil; it reads ENAEYDAAREKQGQIEDRITELENILSNA.

The protein belongs to the GreA/GreB family.

In terms of biological role, necessary for efficient RNA polymerase transcription elongation past template-encoded arresting sites. The arresting sites in DNA have the property of trapping a certain fraction of elongating RNA polymerases that pass through, resulting in locked ternary complexes. Cleavage of the nascent transcript by cleavage factors such as GreA or GreB allows the resumption of elongation from the new 3'terminus. GreA releases sequences of 2 to 3 nucleotides. In Mycoplasmopsis pulmonis (strain UAB CTIP) (Mycoplasma pulmonis), this protein is Transcription elongation factor GreA.